A 219-amino-acid chain; its full sequence is Resolvase (219 aa).

The Resolvase/invertase-type recombinase catalytic domain occupies 15–159; it reads VARIYLRAST…EDRRERQRQG (145 aa). The active-site O-(5'-phospho-DNA)-serine intermediate is the Ser-23.

The protein belongs to the site-specific recombinase resolvase family.

In terms of biological role, involved in plasmid partition. This Escherichia coli protein is Resolvase (parA).